The chain runs to 483 residues: MHQMTLAEIAKGLEAKQFSAEELSRALLARIAQLDPQLNSFITVTEDLAIEQAKAADARRAAGENGALLGAPIAHKDLFCTNGVLTSCGSKILTGFKAPYDATVVEKLKAAGTVTLGKLNMDEFAMGSANESSHYGAVKNPWDTSRVPGGSSGGSAAAVAARLLPAATGTDTGGSIRQPAALTNLTGIKPTYGRVSRWGMIAYASSLDQGGPLARDAFDCALLLGAMAGFDAKDSTSVDQPVDDYLAALAQPLAGLRIGLPKEYFGAGLDARIGEKVMAVVEELKKLGATVKDISLPNMQHAIPAYYVIAPAEASSNLSRFDGVRFGYRCENPVNLEDLYKRSRGEGFGAEVKRRIMVGTYALSAGYYDAYYIKAQQIRRLIKNDFVAAFKDVDVILGPTTPNLAWKLGEKNADPVSAYLEDIYTITANLAGIPGLSMPAGFVDGLPVGVQLLGNYFQEGRLLNVAHQYQQVSDWHKQAPTGF.

Residues Lys76 and Ser151 each act as charge relay system in the active site. The active-site Acyl-ester intermediate is Ser175.

Belongs to the amidase family. GatA subfamily. As to quaternary structure, heterotrimer of A, B and C subunits.

The enzyme catalyses L-glutamyl-tRNA(Gln) + L-glutamine + ATP + H2O = L-glutaminyl-tRNA(Gln) + L-glutamate + ADP + phosphate + H(+). Functionally, allows the formation of correctly charged Gln-tRNA(Gln) through the transamidation of misacylated Glu-tRNA(Gln) in organisms which lack glutaminyl-tRNA synthetase. The reaction takes place in the presence of glutamine and ATP through an activated gamma-phospho-Glu-tRNA(Gln). The chain is Glutamyl-tRNA(Gln) amidotransferase subunit A from Ectopseudomonas mendocina (strain ymp) (Pseudomonas mendocina).